Reading from the N-terminus, the 460-residue chain is Spermatogenesis-defective protein 39 homolog (460 aa).

Thr-21 is subject to Phosphothreonine. Positions 70-101 are disordered; sequence SIKETAGSSGSTSEGREQMKGRNSFYTQLPKP. The segment covering 73–82 has biased composition (low complexity); the sequence is ETAGSSGSTS. Thr-115 bears the Phosphothreonine mark. Phosphoserine occurs at positions 119, 122, and 128. Polar residues predominate over residues 121–133; that stretch reads QSLSDALSDTPAK. A disordered region spans residues 121-141; it reads QSLSDALSDTPAKTYSPELGR. Thr-130 is subject to Phosphothreonine.

It belongs to the SPE39 family. As to quaternary structure, interacts with VPS33B. Associates with the homotypic fusion and vacuole protein sorting (HOPS) complex; impaired by VPS33B. Interacts with RAB11A.

Its subcellular location is the cytoplasm. The protein resides in the cytoplasmic vesicle. It localises to the early endosome. The protein localises to the recycling endosome. It is found in the late endosome. Its function is as follows. Proposed to be involved in endosomal maturation implicating in part VPS33B. In epithelial cells, the VPS33B:VIPAS39 complex may play a role in the apical RAB11A-dependent recycling pathway and in the maintenance of the apical-basolateral polarity. May play a role in lysosomal trafficking, probably via association with the core HOPS complex in a discrete population of endosomes; the functions seems to be independent of VPS33B. May play a role in vesicular trafficking during spermatogenesis. May be involved in direct or indirect transcriptional regulation of E-cadherin. The protein is Spermatogenesis-defective protein 39 homolog (Vipas39) of Rattus norvegicus (Rat).